Here is a 339-residue protein sequence, read N- to C-terminus: DNA-directed RNA polymerase subunit alpha (339 aa).

An alpha N-terminal domain (alpha-NTD) region spans residues 1-233 (MVREEITGST…DLFLPFLHTE (233 aa)). The tract at residues 264–339 (KKGIPLNCIF…IDLPKNKFSL (76 aa)) is alpha C-terminal domain (alpha-CTD).

This sequence belongs to the RNA polymerase alpha chain family. In terms of assembly, in plastids the minimal PEP RNA polymerase catalytic core is composed of four subunits: alpha, beta, beta', and beta''. When a (nuclear-encoded) sigma factor is associated with the core the holoenzyme is formed, which can initiate transcription.

Its subcellular location is the plastid. It localises to the chloroplast. It catalyses the reaction RNA(n) + a ribonucleoside 5'-triphosphate = RNA(n+1) + diphosphate. In terms of biological role, DNA-dependent RNA polymerase catalyzes the transcription of DNA into RNA using the four ribonucleoside triphosphates as substrates. The sequence is that of DNA-directed RNA polymerase subunit alpha from Zea mays (Maize).